The chain runs to 82 residues: Small ribosomal subunit protein bS18 (82 aa).

Positions 1–20 are disordered; the sequence is MVDINQIPTRRPFHRRRKTC.

The protein belongs to the bacterial ribosomal protein bS18 family. Part of the 30S ribosomal subunit. Forms a tight heterodimer with protein bS6.

Its function is as follows. Binds as a heterodimer with protein bS6 to the central domain of the 16S rRNA, where it helps stabilize the platform of the 30S subunit. In Brucella anthropi (strain ATCC 49188 / DSM 6882 / CCUG 24695 / JCM 21032 / LMG 3331 / NBRC 15819 / NCTC 12168 / Alc 37) (Ochrobactrum anthropi), this protein is Small ribosomal subunit protein bS18.